We begin with the raw amino-acid sequence, 426 residues long: MSKSENLYSAARELIPGGVNSPVRAFTGVGGTPLFIEKADGAYLYDVDGKAYIDYVGSWGPMVLGHNHPAIRNAVIEAAERGLSFGAPTEMEVKMAQLVTELVPTMDMVRMVNSGTEATMSAIRLARGFTGRDKIIKFEGCYHGHADCLLVKAGSGALTLGQPNSPGVPADFAKHTLTCTYNDLASVRAAFEQYPQEIACIIVEPVAGNMNCVPPLPEFLPGLRALCDEFGALLIIDEVMTGFRVALAGAQDYYGVVPDLTCLGKIIGGGMPVGAFGGRRDVMDALAPTGPVYQAGTLSGNPIAMAAGFACLNEVAQPGVHETLDELTTRLAEGLREAAEEAGIPLVVNHVGGMFGIFFTDAESVTCYQDVMACDVERFKRFFHMMLDEGVYLAPSAFEAGFMSVAHSMEDINNTIDAARRVFAKL.

An N6-(pyridoxal phosphate)lysine modification is found at lysine 265.

It belongs to the class-III pyridoxal-phosphate-dependent aminotransferase family. HemL subfamily. As to quaternary structure, homodimer. Requires pyridoxal 5'-phosphate as cofactor.

It localises to the cytoplasm. It catalyses the reaction (S)-4-amino-5-oxopentanoate = 5-aminolevulinate. It functions in the pathway porphyrin-containing compound metabolism; protoporphyrin-IX biosynthesis; 5-aminolevulinate from L-glutamyl-tRNA(Glu): step 2/2. The sequence is that of Glutamate-1-semialdehyde 2,1-aminomutase from Escherichia coli O7:K1 (strain IAI39 / ExPEC).